A 165-amino-acid polypeptide reads, in one-letter code: SsrA-binding protein (165 aa).

The segment covering 1 to 10 (MSKKGKKKSK) has biased composition (basic residues). The interval 1-21 (MSKKGKKKSKNNSSVDGNRRL) is disordered.

The protein belongs to the SmpB family.

The protein localises to the cytoplasm. In terms of biological role, required for rescue of stalled ribosomes mediated by trans-translation. Binds to transfer-messenger RNA (tmRNA), required for stable association of tmRNA with ribosomes. tmRNA and SmpB together mimic tRNA shape, replacing the anticodon stem-loop with SmpB. tmRNA is encoded by the ssrA gene; the 2 termini fold to resemble tRNA(Ala) and it encodes a 'tag peptide', a short internal open reading frame. During trans-translation Ala-aminoacylated tmRNA acts like a tRNA, entering the A-site of stalled ribosomes, displacing the stalled mRNA. The ribosome then switches to translate the ORF on the tmRNA; the nascent peptide is terminated with the 'tag peptide' encoded by the tmRNA and targeted for degradation. The ribosome is freed to recommence translation, which seems to be the essential function of trans-translation. This chain is SsrA-binding protein, found in Prochlorococcus marinus (strain NATL1A).